A 692-amino-acid polypeptide reads, in one-letter code: Follicle-stimulating hormone receptor (692 aa).

Residues 1–17 (MALLLVSLLAFLGSGSG) form the signal peptide. Intrachain disulfides connect C18–C25 and C23–C32. The region spanning 18–46 (CHHWLCHCSNRVFLCQDSKVTEIPPDLPR) is the LRRNT domain. Over 18 to 365 (CHHWLCHCSN…EDIMGYNILR (348 aa)) the chain is Extracellular. LRR repeat units lie at residues 49 to 72 (IELRFVLTKLRVIPKGSFSGFGDL), 73 to 97 (EKIEISQNDVLEVIEADVFSNLPNL), 98 to 118 (HEIRIEKANNLLYINPEAFQN), 119 to 143 (LPSLRYLLISNTGIKHLPAFHKIQS), 144 to 169 (LQKVLLDIQDNINIHIIARNSFMGLS), 170 to 192 (FESVILWLNKNGIQEIHNCAFNG), 193 to 216 (TQLDELNLSDNNNLEELPDDVFQG), 217 to 240 (ASGPVVLDISRTKVYSLPNHGLEN), and 241 to 259 (LKKLRARSTYRLKKLPSLD). 2 N-linked (GlcNAc...) asparagine glycosylation sites follow: N191 and N199. 4 disulfides stabilise this stretch: C275–C345, C276–C292, C276–C355, and C292–C337. The N-linked (GlcNAc...) asparagine glycan is linked to N293. Y334 is modified (sulfotyrosine). The helical transmembrane segment at 366 to 386 (VLIWFISILAITGNTTVLVVL) threads the bilayer. Topologically, residues 387–397 (TTSQYKLTVPR) are cytoplasmic. Residues 398-420 (FLMCNLAFADLCIGIYLLLIASV) traverse the membrane as a helical segment. At 421–442 (DIHTKSQYHNYAIDWQTGAGCD) the chain is on the extracellular side. A disulfide bridge links C441 with C516. A helical transmembrane segment spans residues 443–464 (AAGFFTVFASELSVYTLAAITL). Residues 465 to 484 (ERWHTITHAMQLECKVQLCH) are Cytoplasmic-facing. The chain crosses the membrane as a helical span at residues 485-507 (AASIMVLGWAFAFAAALFPIFGI). Residues 508–527 (SSYMKVSICLPMDIDSPLSQ) lie on the Extracellular side of the membrane. A helical membrane pass occupies residues 528-549 (LYVMALLVLNALAFVVICGCYT). At 550–572 (HIYLTVRNPNIVSSSRDTKIAKR) the chain is on the cytoplasmic side. A helical transmembrane segment spans residues 573-596 (MATLIFTDFLCMAPILFFAISASL). Residues 597-607 (KVPLITVSKAK) are Extracellular-facing. A helical transmembrane segment spans residues 608–629 (ILLVLFYPINSCANPFLYAIFT). Residues 630–692 (KNFRRDFFVL…LVPLNHSVQN (63 aa)) lie on the Cytoplasmic side of the membrane.

It belongs to the G-protein coupled receptor 1 family. FSH/LSH/TSH subfamily. Homotrimer. Functions as a homotrimer binding the FSH hormone heterodimer composed of CGA and FSHB. Interacts with ARRB2. Interacts with APPL2; interaction is independent of follicle stimulating hormone stimulation. N-glycosylated; indirectly required for FSH-binding, possibly via a conformational change that allows high affinity binding of hormone. Post-translationally, sulfated.

It is found in the cell membrane. G protein-coupled receptor for follitropin, the follicle-stimulating hormone. Through cAMP production activates the downstream PI3K-AKT and ERK1/ERK2 signaling pathways. This Mus musculus (Mouse) protein is Follicle-stimulating hormone receptor (Fshr).